The primary structure comprises 1059 residues: Disks large-associated protein 2 (1059 aa).

Disordered stretches follow at residues 31–56 (GEPE…EEDI) and 244–311 (TKSH…SDST). Residues 244–261 (TKSHSLEGSSKSNINGTK) show a composition bias toward polar residues. The span at 262–271 (SEGRMDDHHQ) shows a compositional bias: basic and acidic residues. Over residues 272–285 (SHLSKHSKRSKSKE) the composition is skewed to basic residues. Ser-302, Ser-308, Ser-390, and Ser-456 each carry phosphoserine. Disordered stretches follow at residues 446–466 (GDEE…VALR) and 632–669 (VTAQ…NSMD). Positions 632–645 (VTAQSSTESTQDAY) are enriched in polar residues. Phosphoserine occurs at positions 667, 670, 673, and 720. Residues 723-756 (VQDSEFPDHQPYPRSDVETATDSDTESRGLREYH) are disordered. The residue at position 743 (Thr-743) is a Phosphothreonine. At Ser-745 the chain carries Phosphoserine. Over residues 747–756 (TESRGLREYH) the composition is skewed to basic and acidic residues. Residues Ser-776, Ser-811, Ser-983, and Ser-1012 each carry the phosphoserine modification. Positions 985–1024 (ERKEERKIPPPIPKKPPKGKFPITREKSLDLPDRQRQEAR) are disordered. Residues 1007–1024 (ITREKSLDLPDRQRQEAR) show a composition bias toward basic and acidic residues.

This sequence belongs to the SAPAP family. As to quaternary structure, interacts with DLG4/PSD-95. As to expression, expressed in various brain areas.

The protein resides in the cell membrane. It is found in the postsynaptic density. Its subcellular location is the synapse. In terms of biological role, may play a role in the molecular organization of synapses and neuronal cell signaling. Could be an adapter protein linking ion channel to the subsynaptic cytoskeleton. May induce enrichment of PSD-95/SAP90 at the plasma membrane. The chain is Disks large-associated protein 2 from Rattus norvegicus (Rat).